The chain runs to 226 residues: N-(5'-phosphoribosyl)anthranilate isomerase (226 aa).

It belongs to the TrpF family.

It carries out the reaction N-(5-phospho-beta-D-ribosyl)anthranilate = 1-(2-carboxyphenylamino)-1-deoxy-D-ribulose 5-phosphate. It participates in amino-acid biosynthesis; L-tryptophan biosynthesis; L-tryptophan from chorismate: step 3/5. This is N-(5'-phosphoribosyl)anthranilate isomerase from Synechococcus sp. (strain JA-3-3Ab) (Cyanobacteria bacterium Yellowstone A-Prime).